The following is a 389-amino-acid chain: DNA replication and repair protein RecF (389 aa).

Position 30-37 (30-37) interacts with ATP; that stretch reads GPNGFGKT.

It belongs to the RecF family.

The protein resides in the cytoplasm. The RecF protein is involved in DNA metabolism; it is required for DNA replication and normal SOS inducibility. RecF binds preferentially to single-stranded, linear DNA. It also seems to bind ATP. The protein is DNA replication and repair protein RecF of Mycolicibacterium gilvum (strain PYR-GCK) (Mycobacterium gilvum (strain PYR-GCK)).